Consider the following 212-residue polypeptide: ER lumen protein-retaining receptor 1-A (212 aa).

Residues 1–4 are Lumenal-facing; it reads MNIF. Residues 5–24 form a helical membrane-spanning segment; that stretch reads RFLGDISHLSAIFILLLKIW. The Cytoplasmic segment spans residues 25 to 32; that stretch reads KSRSCAGI. The helical transmembrane segment at 33–52 threads the bilayer; it reads SGKSQLLFAIVFTARYLDLF. The segment at 47-48 is interaction with the K-D-E-L motif on target proteins; sequence RY. The Lumenal segment spans residues 53–58; it reads TNYISF. The chain crosses the membrane as a helical span at residues 59-79; it reads YNTSMKVVYVASSYATVWMIY. The Cytoplasmic segment spans residues 80–92; the sequence is SKFKATYDGNHDT. The chain crosses the membrane as a helical span at residues 93–110; that stretch reads FRVEFLIVPTAILAFLVN. At 111 to 116 the chain is on the lumenal side; sequence HDFTPL. The chain crosses the membrane as a helical span at residues 117-135; sequence EIFWTFSIYLESVAILPQL. Residues 136–149 are Cytoplasmic-facing; it reads FMVSKTGEAETITS. Residues 150–168 form a helical membrane-spanning segment; the sequence is HYLFALGIYRTLYLFNWIW. Residues 159 to 169 are interaction with the K-D-E-L motif on target proteins; sequence RTLYLFNWIWR. Topologically, residues 169–178 are lumenal; it reads RYQFEGFFDL. The chain crosses the membrane as a helical span at residues 179 to 199; that stretch reads IAIVAGLVQTVLYCDFFYLYV. At 200 to 212 the chain is on the cytoplasmic side; it reads TKVLKGKKLSLPA. Residues 204–207 form an important for recycling of cargo proteins with the sequence motif K-D-E-L from the Golgi to the endoplasmic reticulum region; sequence KGKK.

Belongs to the ERD2 family.

The protein localises to the golgi apparatus membrane. The protein resides in the cytoplasmic vesicle. It is found in the COPI-coated vesicle membrane. It localises to the endoplasmic reticulum membrane. Its subcellular location is the endoplasmic reticulum-Golgi intermediate compartment membrane. Receptor for the C-terminal sequence motif K-D-E-L that is present on endoplasmic reticulum resident proteins and that mediates their recycling from the Golgi back to the endoplasmic reticulum. This chain is ER lumen protein-retaining receptor 1-A (kdelr1-a), found in Xenopus laevis (African clawed frog).